Here is a 150-residue protein sequence, read N- to C-terminus: Large ribosomal subunit protein uL11 (150 aa).

This sequence belongs to the universal ribosomal protein uL11 family. As to quaternary structure, part of the ribosomal stalk of the 50S ribosomal subunit. Interacts with L10 and the large rRNA to form the base of the stalk. L10 forms an elongated spine to which L12 dimers bind in a sequential fashion forming a multimeric L10(L12)X complex. Post-translationally, one or more lysine residues are methylated.

Forms part of the ribosomal stalk which helps the ribosome interact with GTP-bound translation factors. The chain is Large ribosomal subunit protein uL11 from Ureaplasma parvum serovar 3 (strain ATCC 27815 / 27 / NCTC 11736).